Consider the following 534-residue polypeptide: Benzaldehyde dehydrogenase, mitochondrial (534 aa).

The N-terminal 29 residues, 1 to 29 (MAAHRFSSLLSRSVPLLSRGGKQSYLGRG), are a transit peptide targeting the mitochondrion. Residues 199-202 (IPWN), 225-228 (KTAE), 258-259 (GP), 278-279 (GS), and 301-303 (ELG) contribute to the NAD(+) site. The Proton acceptor role is filled by Glu-301. Cys-335 serves as the catalytic Nucleophile. NAD(+) is bound by residues 381–385 (DQFEK) and 432–434 (EIF).

Belongs to the aldehyde dehydrogenase family. In terms of assembly, homotetramer. Expressed predominantly in the upper and lower flower petal lobes, and, at low levels, in flower tubes, pistils, stamens and sepals.

Its subcellular location is the mitochondrion. It catalyses the reaction an aldehyde + NAD(+) + H2O = a carboxylate + NADH + 2 H(+). The enzyme catalyses acetaldehyde + NAD(+) + H2O = acetate + NADH + 2 H(+). It carries out the reaction benzaldehyde + NAD(+) + H2O = benzoate + NADH + 2 H(+). The catalysed reaction is 2-phenylacetaldehyde + NAD(+) + H2O = 2-phenylacetate + NADH + 2 H(+). Its pathway is aromatic compound metabolism. With respect to regulation, inhibited by disulfiram. Its function is as follows. Component of the floral volatile benzenoid/phenylpropanoid (FVBP) biosynthetic pathway. Catalyzes the oxidation of benzaldehyde to benzoic acid (BA). Capable of oxidizing a broad spectrum of aliphatic aldehydes; increased carbon chain length results in a decrease in its efficiency. This chain is Benzaldehyde dehydrogenase, mitochondrial, found in Antirrhinum majus (Garden snapdragon).